The chain runs to 147 residues: Hemoglobin subunit beta-1 (147 aa).

Residues 3 to 147 (EWTATERTHI…VVSALGRQYH (145 aa)) enclose the Globin domain. Heme b-binding residues include His-64 and His-93.

The protein belongs to the globin family. As to quaternary structure, hb 1 is a heterotetramer of two alpha-1 and two beta-1 chains. Hb 2 is a heterotetramer of two alpha-2 and two beta-1 chains. Red blood cells.

Its function is as follows. Involved in oxygen transport from gills to the various peripheral tissues. This chain is Hemoglobin subunit beta-1 (hbb1), found in Boreogadus saida (Polar cod).